The primary structure comprises 309 residues: tRNA pseudouridine synthase B (309 aa).

Residue Asp52 is the Nucleophile of the active site.

This sequence belongs to the pseudouridine synthase TruB family. Type 1 subfamily.

It catalyses the reaction uridine(55) in tRNA = pseudouridine(55) in tRNA. Responsible for synthesis of pseudouridine from uracil-55 in the psi GC loop of transfer RNAs. The sequence is that of tRNA pseudouridine synthase B from Leptospira interrogans serogroup Icterohaemorrhagiae serovar copenhageni (strain Fiocruz L1-130).